A 352-amino-acid polypeptide reads, in one-letter code: RNA 3'-terminal phosphate cyclase (352 aa).

ATP contacts are provided by residues Gln-100 and 297–301; that span reads HLADQ. His-322 acts as the Tele-AMP-histidine intermediate in catalysis.

Belongs to the RNA 3'-terminal cyclase family. Type 1 subfamily.

The protein resides in the cytoplasm. It catalyses the reaction a 3'-end 3'-phospho-ribonucleotide-RNA + ATP = a 3'-end 2',3'-cyclophospho-ribonucleotide-RNA + AMP + diphosphate. Catalyzes the conversion of 3'-phosphate to a 2',3'-cyclic phosphodiester at the end of RNA. The mechanism of action of the enzyme occurs in 3 steps: (A) adenylation of the enzyme by ATP; (B) transfer of adenylate to an RNA-N3'P to produce RNA-N3'PP5'A; (C) and attack of the adjacent 2'-hydroxyl on the 3'-phosphorus in the diester linkage to produce the cyclic end product. The biological role of this enzyme is unknown but it is likely to function in some aspects of cellular RNA processing. The chain is RNA 3'-terminal phosphate cyclase from Methanosarcina mazei (strain ATCC BAA-159 / DSM 3647 / Goe1 / Go1 / JCM 11833 / OCM 88) (Methanosarcina frisia).